The following is a 365-amino-acid chain: Aminomethyltransferase (365 aa).

This sequence belongs to the GcvT family. In terms of assembly, the glycine cleavage system is composed of four proteins: P, T, L and H.

It carries out the reaction N(6)-[(R)-S(8)-aminomethyldihydrolipoyl]-L-lysyl-[protein] + (6S)-5,6,7,8-tetrahydrofolate = N(6)-[(R)-dihydrolipoyl]-L-lysyl-[protein] + (6R)-5,10-methylene-5,6,7,8-tetrahydrofolate + NH4(+). Its function is as follows. The glycine cleavage system catalyzes the degradation of glycine. This Natranaerobius thermophilus (strain ATCC BAA-1301 / DSM 18059 / JW/NM-WN-LF) protein is Aminomethyltransferase.